A 704-amino-acid chain; its full sequence is Elongation factor G (704 aa).

The region spanning D8 to V291 is the tr-type G domain. Residues A17–T24, D90–H94, and N144–D147 each bind GTP.

It belongs to the TRAFAC class translation factor GTPase superfamily. Classic translation factor GTPase family. EF-G/EF-2 subfamily.

It localises to the cytoplasm. In terms of biological role, catalyzes the GTP-dependent ribosomal translocation step during translation elongation. During this step, the ribosome changes from the pre-translocational (PRE) to the post-translocational (POST) state as the newly formed A-site-bound peptidyl-tRNA and P-site-bound deacylated tRNA move to the P and E sites, respectively. Catalyzes the coordinated movement of the two tRNA molecules, the mRNA and conformational changes in the ribosome. The chain is Elongation factor G from Chlorobium phaeobacteroides (strain DSM 266 / SMG 266 / 2430).